An 808-amino-acid chain; its full sequence is DNA replication licensing factor MCM3 (808 aa).

Ala-2 is subject to N-acetylalanine. Phosphoserine occurs at positions 160 and 275. Lys-293 carries the N6-acetyllysine modification. The MCM domain occupies 295–502; the sequence is IFDQLARSLA…QDREISDHVL (208 aa). Positions 353, 393, 394, 395, and 397 each coordinate ADP. The Arginine finger signature appears at 477-480; it reads SRFD. Ala-523 lines the ATP pocket. Ser-535 is modified (phosphoserine; by ATM). The residue at position 547 (Lys-547) is an N6-acetyllysine. Phosphoserine is present on Ser-611. Residues 662–739 are disordered; sequence KKRKKRSEDE…ETKESQKVEL (78 aa). Arg-664 contacts ATP. 3 positions are modified to phosphoserine: Ser-668, Ser-672, and Ser-681. A compositionally biased stretch (basic and acidic residues) spans 679-688; it reads EKSQEDQEQK. Phosphotyrosine is present on Tyr-708. 2 positions are modified to phosphothreonine: Thr-713 and Thr-722. Over residues 727 to 739 the composition is skewed to basic and acidic residues; the sequence is DSQETKESQKVEL. Phosphoserine is present on residues Ser-728 and Ser-734.

It belongs to the MCM family. As to quaternary structure, component of the MCM2-7 complex. The complex forms a toroidal hexameric ring with the proposed subunit order MCM2-MCM6-MCM4-MCM7-MCM3-MCM5. Component of the CMG helicase complex, a hexameric ring of related MCM2-7 subunits stabilized by CDC45 and the tetrameric GINS complex. Associated with the replication-specific DNA polymerase alpha. Interacts with MCMBP. Interacts with ANKRD17. Interacts with MCM3AP isoform MCM3AP; this interaction leads to MCM3 acetylation. Post-translationally, acetylated by MCM3AP. O-glycosylated (O-GlcNAcylated), in a cell cycle-dependent manner.

The protein localises to the nucleus. It localises to the chromosome. The catalysed reaction is ATP + H2O = ADP + phosphate + H(+). Its function is as follows. Acts as a component of the MCM2-7 complex (MCM complex) which is the replicative helicase essential for 'once per cell cycle' DNA replication initiation and elongation in eukaryotic cells. Core component of CDC45-MCM-GINS (CMG) helicase, the molecular machine that unwinds template DNA during replication, and around which the replisome is built. The active ATPase sites in the MCM2-7 ring are formed through the interaction surfaces of two neighboring subunits such that a critical structure of a conserved arginine finger motif is provided in trans relative to the ATP-binding site of the Walker A box of the adjacent subunit. The six ATPase active sites, however, are likely to contribute differentially to the complex helicase activity. Required for the entry in S phase and for cell division. The chain is DNA replication licensing factor MCM3 (MCM3) from Bos taurus (Bovine).